A 203-amino-acid polypeptide reads, in one-letter code: 3-isopropylmalate dehydratase small subunit (203 aa).

Belongs to the LeuD family. LeuD type 1 subfamily. Heterodimer of LeuC and LeuD.

It catalyses the reaction (2R,3S)-3-isopropylmalate = (2S)-2-isopropylmalate. Its pathway is amino-acid biosynthesis; L-leucine biosynthesis; L-leucine from 3-methyl-2-oxobutanoate: step 2/4. Catalyzes the isomerization between 2-isopropylmalate and 3-isopropylmalate, via the formation of 2-isopropylmaleate. This Phenylobacterium zucineum (strain HLK1) protein is 3-isopropylmalate dehydratase small subunit.